Reading from the N-terminus, the 351-residue chain is tRNA pseudouridine synthase D (351 aa).

Aspartate 81 serves as the catalytic Nucleophile. In terms of domain architecture, TRUD spans 158–304; that stretch reads GVPNYFGSQR…MRHERRAIEL (147 aa).

Belongs to the pseudouridine synthase TruD family.

It catalyses the reaction uridine(13) in tRNA = pseudouridine(13) in tRNA. In terms of biological role, responsible for synthesis of pseudouridine from uracil-13 in transfer RNAs. In Aliivibrio fischeri (strain ATCC 700601 / ES114) (Vibrio fischeri), this protein is tRNA pseudouridine synthase D.